Reading from the N-terminus, the 86-residue chain is U2-sicaritoxin-Li1a (86 aa).

The first 20 residues, 1 to 20, serve as a signal peptide directing secretion; that stretch reads MTFKLFVVVTLVLAIYVATA. The propeptide occupies 21 to 33; sequence EEAMKDDSEPAER. Cystine bridges form between Cys-35–Cys-53, Cys-42–Cys-62, Cys-52–Cys-71, and Cys-64–Cys-69.

The protein belongs to the neurotoxin 39 family. In terms of tissue distribution, expressed by the venom gland.

The protein resides in the secreted. In terms of biological role, toxin active against S.frugiperda larvae. May act on sodium channels (Nav). The protein is U2-sicaritoxin-Li1a of Loxosceles intermedia (Brown spider).